Consider the following 360-residue polypeptide: MRFSLFVHMERVSDQQTQKQLYDEMIELCQIADRGGMHAIWTGEHHAMNFTIAPNPFLNIADLANKTKHVRLGTGTVVAPFWHPIKLAGEAAMTDIISNGRLDIGIARGAYSFEYERMVPGMDAWSAGQRLREMIPAIKNLWKGDYEHNGEFWQFPKTTSAPQPLQQPNPPIWVAARDPNSHEFAVQNGCNVQVTPLHLGDEEVEKLMGHFNSACEKFQDIERPEIMLLRHTYVADSEEDAQVAANEMNVFYNYFGAWFKNEREINQGLIAPLSDEEIAAHPFYTPEAMRKNNVIGQAQEVIDRLKAYEAMGYDEYSFWIDTGMSFERKKASLERMINEVMPAFSESKVDRRHATISAVY.

This sequence belongs to the bacterial luciferase oxidoreductase family. As to quaternary structure, homodimer. The trigonelline monooxygenase is composed of a reductase component TgnA and an oxygenase component TgnB.

The enzyme catalyses N-methylnicotinate + FMNH2 + O2 = (Z)-2-((N-methylformamido)methylene)-5-hydroxybutanolactone + FMN + H(+). It carries out the reaction N-methylnicotinate + FADH2 + O2 = (Z)-2-((N-methylformamido)methylene)-5-hydroxybutanolactone + FAD + H(+). Involved in the degradation of the pyridine ring of trigonelline (TG; N-methylnicotinate) into succinate and methylamine as carbon and nitrogen sources, respectively. Catalyzes the insertion of two oxygens, followed by a ring cleavage of trigonelline to yield (Z)-2-((N-methylformamido)methylene)-5-hydroxybutyrolactone (MFMB). It is able to use reduced FMN or FAD. This chain is Flavin-dependent trigonelline monooxygenase, oxygenase component, found in Acinetobacter baylyi (strain ATCC 33305 / BD413 / ADP1).